We begin with the raw amino-acid sequence, 625 residues long: tRNA uridine 5-carboxymethylaminomethyl modification enzyme MnmG (625 aa).

14–19 serves as a coordination point for FAD; that stretch reads GAGHAG. NAD(+) is bound at residue 273-287; sequence GPRYCPSIEDKIVRF.

Belongs to the MnmG family. In terms of assembly, homodimer. Heterotetramer of two MnmE and two MnmG subunits. Requires FAD as cofactor.

The protein localises to the cytoplasm. Functionally, NAD-binding protein involved in the addition of a carboxymethylaminomethyl (cmnm) group at the wobble position (U34) of certain tRNAs, forming tRNA-cmnm(5)s(2)U34. The chain is tRNA uridine 5-carboxymethylaminomethyl modification enzyme MnmG from Clostridium botulinum (strain Loch Maree / Type A3).